Consider the following 341-residue polypeptide: Beta-ketoacyl-[acyl-carrier-protein] synthase III 1 (341 aa).

Catalysis depends on residues Cys-113 and His-249. Positions 250–254 are ACP-binding; it reads QANIR. The active site involves Asn-279.

It belongs to the thiolase-like superfamily. FabH family. In terms of assembly, homodimer.

The protein localises to the cytoplasm. It catalyses the reaction malonyl-[ACP] + acetyl-CoA + H(+) = 3-oxobutanoyl-[ACP] + CO2 + CoA. The protein operates within lipid metabolism; fatty acid biosynthesis. Catalyzes the condensation reaction of fatty acid synthesis by the addition to an acyl acceptor of two carbons from malonyl-ACP. Catalyzes the first condensation reaction which initiates fatty acid synthesis and may therefore play a role in governing the total rate of fatty acid production. Possesses both acetoacetyl-ACP synthase and acetyl transacylase activities. Its substrate specificity determines the biosynthesis of branched-chain and/or straight-chain of fatty acids. The protein is Beta-ketoacyl-[acyl-carrier-protein] synthase III 1 of Deinococcus radiodurans (strain ATCC 13939 / DSM 20539 / JCM 16871 / CCUG 27074 / LMG 4051 / NBRC 15346 / NCIMB 9279 / VKM B-1422 / R1).